A 200-amino-acid chain; its full sequence is Adenylate kinase (200 aa).

An ATP-binding site is contributed by 10 to 15 (GAGKGT). The NMP stretch occupies residues 30–59 (STGDMLRAAVAAETPVGLEAKAIMESGGLV). AMP contacts are provided by residues threonine 31, arginine 36, 57 to 59 (GLV), 85 to 88 (GFPR), and glutamine 92. An LID region spans residues 126 to 142 (KRAEETAARGQPVRKDD). Arginine 127 is an ATP binding site. 2 residues coordinate AMP: arginine 139 and arginine 150. Lysine 178 contributes to the ATP binding site.

It belongs to the adenylate kinase family. As to quaternary structure, monomer.

It localises to the cytoplasm. It carries out the reaction AMP + ATP = 2 ADP. The protein operates within purine metabolism; AMP biosynthesis via salvage pathway; AMP from ADP: step 1/1. In terms of biological role, catalyzes the reversible transfer of the terminal phosphate group between ATP and AMP. Plays an important role in cellular energy homeostasis and in adenine nucleotide metabolism. This chain is Adenylate kinase, found in Methylorubrum extorquens (strain CM4 / NCIMB 13688) (Methylobacterium extorquens).